The sequence spans 115 residues: NADH-ubiquinone oxidoreductase chain 3 (115 aa).

The next 3 membrane-spanning stretches (helical) occupy residues 1–21 (MITL…LLII), 55–75 (FFLV…LFPL), and 87–107 (AIIL…YEWL).

The protein belongs to the complex I subunit 3 family.

The protein resides in the mitochondrion membrane. It carries out the reaction a ubiquinone + NADH + 5 H(+)(in) = a ubiquinol + NAD(+) + 4 H(+)(out). Core subunit of the mitochondrial membrane respiratory chain NADH dehydrogenase (Complex I) that is believed to belong to the minimal assembly required for catalysis. Complex I functions in the transfer of electrons from NADH to the respiratory chain. The immediate electron acceptor for the enzyme is believed to be ubiquinone. This is NADH-ubiquinone oxidoreductase chain 3 (MT-ND3) from Myxine glutinosa (Atlantic hagfish).